A 79-amino-acid polypeptide reads, in one-letter code: Dolichyl-diphosphooligosaccharide--protein glycosyltransferase subunit TMEM258 (79 aa).

2 helical membrane passes run 18 to 38 and 55 to 75; these read LPLL…AFTM and FIAA…LLWV.

The protein belongs to the OST5 family. In terms of assembly, component of the oligosaccharyltransferase (OST) complex.

The protein resides in the membrane. It participates in protein modification; protein glycosylation. Its function is as follows. Subunit of the oligosaccharyl transferase (OST) complex that catalyzes the initial transfer of a defined glycan (Glc(3)Man(9)GlcNAc(2) in eukaryotes) from the lipid carrier dolichol-pyrophosphate to an asparagine residue within an Asn-X-Ser/Thr consensus motif in nascent polypeptide chains, the first step in protein N-glycosylation. N-glycosylation occurs cotranslationally and the complex associates with the Sec61 complex at the channel-forming translocon complex that mediates protein translocation across the endoplasmic reticulum (ER). All subunits are required for a maximal enzyme activity. This chain is Dolichyl-diphosphooligosaccharide--protein glycosyltransferase subunit TMEM258, found in Caenorhabditis briggsae.